The primary structure comprises 853 residues: FIGNL1-interacting regulator of recombination and mitosis (853 aa).

Phosphoserine; by PLK1 is present on residues serine 43 and serine 744. N6-acetyllysine is present on lysine 792.

As to quaternary structure, interacts (via its N-terminal region) with PLK1; controls PLK1 kinase activity. Interacts (via the KVVXF motif) with PPP1CC; controls PLK1 kinase activity. Interacts with FIGNL1; may regulate homologous recombination. In terms of processing, phosphorylation at Ser-43 by PLK1 strengthens FIRRM-PLK1 interaction. Phosphorylation at Ser-744 by PLK1 negatively regulates its interaction with PPP1CC.

It is found in the chromosome. The protein resides in the centromere. It localises to the kinetochore. The protein localises to the nucleus. Its subcellular location is the midbody. It is found in the cytoplasm. The protein resides in the cytoskeleton. It localises to the spindle. Regulates PLK1 kinase activity at kinetochores and promotes faithful chromosome segregation in prometaphase by bridging kinase and phosphatase activities. Phosphorylation of FIRRM by PLK1 negatively regulates its interaction with the phosphatase, PPP1CC, thus creating a negative feedback loop for maintaining proper PLK1 kinase activity during mitosis. In complex with FIGL1 may regulate homologous recombination. The polypeptide is FIGNL1-interacting regulator of recombination and mitosis (Homo sapiens (Human)).